Reading from the N-terminus, the 126-residue chain is Large ribosomal subunit protein bL12 (126 aa).

This sequence belongs to the bacterial ribosomal protein bL12 family. In terms of assembly, homodimer. Part of the ribosomal stalk of the 50S ribosomal subunit. Forms a multimeric L10(L12)X complex, where L10 forms an elongated spine to which 2 to 4 L12 dimers bind in a sequential fashion. Binds GTP-bound translation factors.

Forms part of the ribosomal stalk which helps the ribosome interact with GTP-bound translation factors. Is thus essential for accurate translation. This Coxiella burnetii (strain CbuK_Q154) (Coxiella burnetii (strain Q154)) protein is Large ribosomal subunit protein bL12.